We begin with the raw amino-acid sequence, 277 residues long: Type II restriction enzyme RsrI (277 aa).

It belongs to the EcoRI type II restriction endonuclease family. Homodimer. The cofactor is Mg(2+).

The catalysed reaction is Endonucleolytic cleavage of DNA to give specific double-stranded fragments with terminal 5'-phosphates.. A P subtype restriction enzyme that recognizes the double-stranded sequence 5'-GAATTC-3' and cleaves after G-1. In Cereibacter sphaeroides (Rhodobacter sphaeroides), this protein is Type II restriction enzyme RsrI (rsrIR).